A 386-amino-acid chain; its full sequence is Formate-dependent phosphoribosylglycinamide formyltransferase (386 aa).

N(1)-(5-phospho-beta-D-ribosyl)glycinamide is bound by residues 15–16 and Glu-75; that span reads EL. Residues Arg-107, Lys-148, 153-158, 188-191, and Glu-196 contribute to the ATP site; these read SSGKGQ and EQFI. Residues 112-301 form the ATP-grasp domain; that stretch reads ALAAQQLNLQ…EFELHLRAIV (190 aa). Mg(2+) is bound by residues Glu-260 and Glu-272. N(1)-(5-phospho-beta-D-ribosyl)glycinamide-binding positions include Asp-279, Lys-349, and 356-357; that span reads RR.

This sequence belongs to the PurK/PurT family. As to quaternary structure, homodimer.

It carries out the reaction N(1)-(5-phospho-beta-D-ribosyl)glycinamide + formate + ATP = N(2)-formyl-N(1)-(5-phospho-beta-D-ribosyl)glycinamide + ADP + phosphate + H(+). It participates in purine metabolism; IMP biosynthesis via de novo pathway; N(2)-formyl-N(1)-(5-phospho-D-ribosyl)glycinamide from N(1)-(5-phospho-D-ribosyl)glycinamide (formate route): step 1/1. Its function is as follows. Involved in the de novo purine biosynthesis. Catalyzes the transfer of formate to 5-phospho-ribosyl-glycinamide (GAR), producing 5-phospho-ribosyl-N-formylglycinamide (FGAR). Formate is provided by PurU via hydrolysis of 10-formyl-tetrahydrofolate. The chain is Formate-dependent phosphoribosylglycinamide formyltransferase from Francisella tularensis subsp. novicida (strain U112).